Here is a 349-residue protein sequence, read N- to C-terminus: Phospho-N-acetylmuramoyl-pentapeptide-transferase (349 aa).

The next 10 membrane-spanning stretches (helical) occupy residues 13–33, 69–89, 91–111, 129–149, 165–185, 197–217, 228–248, 252–272, 278–298, and 327–347; these read LFFS…SLGV, GGGV…LPWG, FSTW…WYDD, FMVQ…IYGS, LSLP…VAII, LDGL…FVAL, VAYV…YNGF, LFMG…CAVM, ILVV…LQVL, and IVMR…AAVL.

Belongs to the glycosyltransferase 4 family. MraY subfamily. Mg(2+) is required as a cofactor.

It is found in the cell inner membrane. It carries out the reaction UDP-N-acetyl-alpha-D-muramoyl-L-alanyl-gamma-D-glutamyl-meso-2,6-diaminopimeloyl-D-alanyl-D-alanine + di-trans,octa-cis-undecaprenyl phosphate = di-trans,octa-cis-undecaprenyl diphospho-N-acetyl-alpha-D-muramoyl-L-alanyl-D-glutamyl-meso-2,6-diaminopimeloyl-D-alanyl-D-alanine + UMP. Its pathway is cell wall biogenesis; peptidoglycan biosynthesis. Functionally, catalyzes the initial step of the lipid cycle reactions in the biosynthesis of the cell wall peptidoglycan: transfers peptidoglycan precursor phospho-MurNAc-pentapeptide from UDP-MurNAc-pentapeptide onto the lipid carrier undecaprenyl phosphate, yielding undecaprenyl-pyrophosphoryl-MurNAc-pentapeptide, known as lipid I. In Chlamydia pneumoniae (Chlamydophila pneumoniae), this protein is Phospho-N-acetylmuramoyl-pentapeptide-transferase.